A 453-amino-acid chain; its full sequence is Bifunctional protein GlmU (453 aa).

A pyrophosphorylase region spans residues 1 to 227; sequence MAVSVIILAA…SIEVMGVNDR (227 aa). Residues 8-11, Lys-22, Gln-73, 78-79, 100-102, Gly-137, Glu-152, Asn-167, and Asn-225 each bind UDP-N-acetyl-alpha-D-glucosamine; these read LAAG, GT, and SGD. A Mg(2+)-binding site is contributed by Asp-102. Asn-225 is a binding site for Mg(2+). The tract at residues 228–248 is linker; the sequence is QQLAYLERFYQKREAARLMGE. The interval 249 to 453 is N-acetyltransferase; sequence GVSLSDPDRF…WPGWKRPSKK (205 aa). UDP-N-acetyl-alpha-D-glucosamine is bound by residues Arg-331 and Lys-349. Residue His-361 is the Proton acceptor of the active site. Tyr-364 and Asn-375 together coordinate UDP-N-acetyl-alpha-D-glucosamine. Acetyl-CoA contacts are provided by residues Ala-378, 384–385, Ser-403, Ala-421, and Arg-438; that span reads NY. A disordered region spans residues 430–453; the sequence is PPGELTLSRTPQKSWPGWKRPSKK.

This sequence in the N-terminal section; belongs to the N-acetylglucosamine-1-phosphate uridyltransferase family. The protein in the C-terminal section; belongs to the transferase hexapeptide repeat family. Homotrimer. The cofactor is Mg(2+).

It localises to the cytoplasm. The catalysed reaction is alpha-D-glucosamine 1-phosphate + acetyl-CoA = N-acetyl-alpha-D-glucosamine 1-phosphate + CoA + H(+). It carries out the reaction N-acetyl-alpha-D-glucosamine 1-phosphate + UTP + H(+) = UDP-N-acetyl-alpha-D-glucosamine + diphosphate. The protein operates within nucleotide-sugar biosynthesis; UDP-N-acetyl-alpha-D-glucosamine biosynthesis; N-acetyl-alpha-D-glucosamine 1-phosphate from alpha-D-glucosamine 6-phosphate (route II): step 2/2. It participates in nucleotide-sugar biosynthesis; UDP-N-acetyl-alpha-D-glucosamine biosynthesis; UDP-N-acetyl-alpha-D-glucosamine from N-acetyl-alpha-D-glucosamine 1-phosphate: step 1/1. Its pathway is bacterial outer membrane biogenesis; LPS lipid A biosynthesis. Functionally, catalyzes the last two sequential reactions in the de novo biosynthetic pathway for UDP-N-acetylglucosamine (UDP-GlcNAc). The C-terminal domain catalyzes the transfer of acetyl group from acetyl coenzyme A to glucosamine-1-phosphate (GlcN-1-P) to produce N-acetylglucosamine-1-phosphate (GlcNAc-1-P), which is converted into UDP-GlcNAc by the transfer of uridine 5-monophosphate (from uridine 5-triphosphate), a reaction catalyzed by the N-terminal domain. This Nitrosococcus oceani (strain ATCC 19707 / BCRC 17464 / JCM 30415 / NCIMB 11848 / C-107) protein is Bifunctional protein GlmU.